The sequence spans 604 residues: Arginine--tRNA ligase (604 aa).

The 'HIGH' region signature appears at 142–152; it reads PNIAKEMHVGH.

It belongs to the class-I aminoacyl-tRNA synthetase family. Monomer.

The protein resides in the cytoplasm. It catalyses the reaction tRNA(Arg) + L-arginine + ATP = L-arginyl-tRNA(Arg) + AMP + diphosphate. The sequence is that of Arginine--tRNA ligase from Prochlorococcus marinus (strain MIT 9312).